The chain runs to 704 residues: Rabphilin-3A (704 aa).

The segment covering 1–12 (MTDTVFSSSSSR) has biased composition (polar residues). Positions 1–52 (MTDTVFSSSSSRWMCPSDRPLQSNDKEQLQTGWSVHPSGQPDRQRKQEELTD) are disordered. Residues 44 to 161 (QRKQEELTDE…KRSGAWFFKG (118 aa)) enclose the RabBD domain. Residues 92–149 (GDGVNRCILCGEQLGMLGSACVVCEDCKKNVCTKCGVETSNNRPHPVWLCKICIEQRE) form an FYVE-type zinc finger. Residues C98, C101, C115, C118, C123, C126, C141, and C144 each contribute to the Zn(2+) site. Residues 167–398 (LPQPMPIKKN…EEEANSYDSD (232 aa)) form a disordered region. Basic and acidic residues predominate over residues 205 to 214 (TRGDTEDRRG). An Omega-N-methylarginine modification is found at R229. Position 277 is a phosphoserine (S277). Positions 279–290 (QASRPAPASMQS) are enriched in low complexity. Residues 291–310 (PAPPQPGQPGPPGGSRPSPG) are compositionally biased toward pro residues. Over residues 366 to 380 (QASAAAPQPVVASAR) the composition is skewed to low complexity. The span at 385–398 (PEEDEEEANSYDSD) shows a compositional bias: acidic residues. Residues 402 to 524 (TLGALEFSLL…KPNQRKNFNI (123 aa)) enclose the C2 1 domain. Residues M432, D433, D439, D494, E495, D496, E502, E549, D591, D597, D651, Y652, D653, and D659 each contribute to the Ca(2+) site. Positions 560–693 (ERGKILVSLM…NKDKKIERWH (134 aa)) constitute a C2 2 domain. A phosphoserine mark is found at S702 and S703.

In terms of assembly, interacts with RAB3B, RAB3C, RAB3D, RAB8A, RAB27A and RAB27B. Interacts with RAB3A; this interaction recruits RPH3A to synaptic vesicules. Interacts (via C2B domain) with SNAP25. Interacts with deubiquitinating enzyme CAND1; this interaction results in the deubiquitination of RPH3A. Interacts with GRIN2A and DLG4; this ternary complex regulates NMDA receptor composition at postsynaptic membranes. Interacts with SNCA. Ca(2+) serves as cofactor. Post-translationally, ubiquitinated. Deubiquitinated by CAND1 to prevent its degradation. As to expression, specifically expressed in brain.

The protein localises to the cytoplasmic vesicle. The protein resides in the secretory vesicle. It localises to the synaptic vesicle membrane. Its subcellular location is the cell projection. It is found in the dendritic spine. The protein localises to the postsynaptic cell membrane. The protein resides in the membrane. Functionally, plays an essential role in docking and fusion steps of regulated exocytosis. At the presynaptic level, RPH3A is recruited by RAB3A to the synaptic vesicle membrane in a GTP-dependent manner where it modulates synaptic vesicle trafficking and calcium-triggered neurotransmitter release. In the post-synaptic compartment, forms a ternary complex with GRIN2A and DLG4 and regulates NMDA receptor stability. Also plays a role in the exocytosis of arginine vasopressin hormone. The polypeptide is Rabphilin-3A (RPH3A) (Bos taurus (Bovine)).